The primary structure comprises 1193 residues: Chloride channel protein 2 (1193 aa).

Over 1–168 (MVYFGDRQRD…WIWRHTVARL (168 aa)) the chain is Cytoplasmic. The interval 76–97 (SHAFYPCPPPAENARDSDSSDD) is disordered. A run of 2 helical transmembrane segments spans residues 169 to 204 (GEDWVFLALLGIIMALLSFIMDKGISICTNARIWLY) and 213 to 236 (VQYIAWVSLPVCLILFSAGFVHLI). The short motif at 242–246 (GSGIP) is the Selectivity filter part_1 element. Serine 243 lines the chloride pocket. An intramembrane region (helical) is located at residues 245–252 (IPEMKTIL). 2 consecutive transmembrane segments (helical) span residues 261–279 (LTFKTLVAKVIGLTATLGS) and 286–304 (EGPFVHIASIVAQLLSKLV). The Selectivity filter part_2 signature appears at 284 to 288 (GKEGP). 2 consecutive intramembrane regions (helical) follow at residues 320–332 (MLAAACAVGVGAC) and 336–344 (PVGGVLFSI). The next 5 membrane-spanning stretches (helical) occupy residues 356–373 (YWRGFFAAVCGATVFRLL), 402–430 (LFVFALIGLVCGLGGASYVWVHRRYVLFM), 439–458 (FLQKNRFLYPGFLALLVSSI), 511–530 (FGNLVIYTLFTFVVSIIAST), and 536–555 (GMFIPVFKIGAGFGRLVGEF). The Selectivity filter part_3 signature appears at 536–540 (GMFIP). Phenylalanine 538 lines the chloride pocket. The segment at residues 576–590 (GGYAVVGAAAFSGSV) is an intramembrane region (helical). The note=Loop between two helices intramembrane region spans 591-592 (TH). Positions 593 to 604 (TVSVAVIIFEMT) form an intramembrane region, helical. An intramembrane region (note=Loop between two helices) is located at residues 605–609 (GQITH). Residues 610 to 626 (VVPVMIAVLVANAVAAL) traverse the membrane as a helical segment. Residues 627 to 1193 (LQPSIYDSII…KSNTENGNHA (567 aa)) are Cytoplasmic-facing. Tyrosine 632 serves as a coordination point for chloride. Positions 663 to 723 (MVRDVKYIWH…KMIEKHIGRE (61 aa)) constitute a CBS 1 domain. Disordered regions lie at residues 848–884 (TLQDVQPDPETGSLSPAASNHEVEVPRTPSTPGVSKK), 1103–1122 (NSFVPPTRDEDADEKPAVEK), and 1159–1193 (IKHTDKGTVSLTMPPQESKQSPSADKSNTENGNHA). Residues 1048 to 1105 (IDPSPFQLVERTSILKVHSLFSMVGINHAYVTKIGRLVGVVGLKELRKAIEDINSNSF) form the CBS 2 domain. Positions 1165-1193 (GTVSLTMPPQESKQSPSADKSNTENGNHA) are enriched in polar residues.

Belongs to the chloride channel (TC 2.A.49) family. At embryonic stages 13-16, expressed in a subset of the midline cells of the midline primordium and in all of the midline glia. Expressed along the Z-line of the sarcomere in larval longitudinal muscles.

The protein resides in the membrane. Functionally, voltage-gated chloride channel. Chloride channels have several functions including the regulation of cell volume; membrane potential stabilization, signal transduction and transepithelial transport. The protein is Chloride channel protein 2 (ClC-a) of Drosophila melanogaster (Fruit fly).